A 541-amino-acid chain; its full sequence is Zinc finger protein 655 (541 aa).

The segment at 1 to 22 (MEEVTSQEAAESPRGHFQPLEN) is disordered. C2H2-type zinc fingers lie at residues 243-265 (YKCDTCGKTFHQASALTRHQRIH), 271-293 (YKCKECEKSFSQSSSLSRHKRIH), 334-356 (YKCGTCERVFSRSVHLTQHQRTH), 361-383 (CKCTVCGSDFCHTSYLVEHQRLH), 411-433 (YSCNECGKDFRLNSHLIQHQRIH), and 439-461 (HECNECGKSFSQTSCLIQHHKMH). A C2H2-type 7; degenerate zinc finger spans residues 495–517 (FDCDAWEENFSQRAHLIQHERVH).

Belongs to the krueppel C2H2-type zinc-finger protein family. As to quaternary structure, interacts with VAV1 and CDK4. Interacts with INTS13; promoting association with the integrator complex.

The protein localises to the nucleus. Functionally, probable transcription factor. The protein is Zinc finger protein 655 (Znf655) of Mus musculus (Mouse).